The following is a 1391-amino-acid chain: DNA-directed RNA polymerase subunit beta' (1391 aa).

Zn(2+)-binding residues include Cys-72, Cys-74, Cys-87, and Cys-90. Mg(2+)-binding residues include Asp-462, Asp-464, and Asp-466. Positions 816, 890, 897, and 900 each coordinate Zn(2+).

The protein belongs to the RNA polymerase beta' chain family. As to quaternary structure, the RNAP catalytic core consists of 2 alpha, 1 beta, 1 beta' and 1 omega subunit. When a sigma factor is associated with the core the holoenzyme is formed, which can initiate transcription. Requires Mg(2+) as cofactor. It depends on Zn(2+) as a cofactor.

The catalysed reaction is RNA(n) + a ribonucleoside 5'-triphosphate = RNA(n+1) + diphosphate. In terms of biological role, DNA-dependent RNA polymerase catalyzes the transcription of DNA into RNA using the four ribonucleoside triphosphates as substrates. In Neisseria meningitidis serogroup A / serotype 4A (strain DSM 15465 / Z2491), this protein is DNA-directed RNA polymerase subunit beta'.